The primary structure comprises 127 residues: Adult-specific rigid cuticular protein 12.6 (127 aa).

Residues Gly9–Pro87 enclose the Chitin-binding type R&amp;R domain.

Its function is as follows. Component of the rigid cuticle of the spider. The sequence is that of Adult-specific rigid cuticular protein 12.6 from Araneus diadematus (European garden spider).